A 471-amino-acid polypeptide reads, in one-letter code: ATP synthase subunit beta (471 aa).

Residue 156–163 (GGAGVGKT) participates in ATP binding.

This sequence belongs to the ATPase alpha/beta chains family. F-type ATPases have 2 components, CF(1) - the catalytic core - and CF(0) - the membrane proton channel. CF(1) has five subunits: alpha(3), beta(3), gamma(1), delta(1), epsilon(1). CF(0) has three main subunits: a(1), b(2) and c(9-12). The alpha and beta chains form an alternating ring which encloses part of the gamma chain. CF(1) is attached to CF(0) by a central stalk formed by the gamma and epsilon chains, while a peripheral stalk is formed by the delta and b chains.

Its subcellular location is the cell inner membrane. The catalysed reaction is ATP + H2O + 4 H(+)(in) = ADP + phosphate + 5 H(+)(out). In terms of biological role, produces ATP from ADP in the presence of a proton gradient across the membrane. The catalytic sites are hosted primarily by the beta subunits. This is ATP synthase subunit beta from Nitratidesulfovibrio vulgaris (strain DSM 19637 / Miyazaki F) (Desulfovibrio vulgaris).